The primary structure comprises 1095 residues: DNA-directed RNA polymerase subunit beta (1095 aa).

The tract at residues 1069-1095 (DLMQDVNPRRSTPSRPTYESLGKEYEE) is disordered.

It belongs to the RNA polymerase beta chain family. In cyanobacteria the RNAP catalytic core is composed of 2 alpha, 1 beta, 1 beta', 1 gamma and 1 omega subunit. When a sigma factor is associated with the core the holoenzyme is formed, which can initiate transcription.

It carries out the reaction RNA(n) + a ribonucleoside 5'-triphosphate = RNA(n+1) + diphosphate. Its function is as follows. DNA-dependent RNA polymerase catalyzes the transcription of DNA into RNA using the four ribonucleoside triphosphates as substrates. This Prochlorococcus marinus (strain NATL2A) protein is DNA-directed RNA polymerase subunit beta.